The following is a 1064-amino-acid chain: DNA-directed RNA polymerase subunit beta (1064 aa).

This sequence belongs to the RNA polymerase beta chain family. In terms of assembly, in plastids the minimal PEP RNA polymerase catalytic core is composed of four subunits: alpha, beta, beta', and beta''. When a (nuclear-encoded) sigma factor is associated with the core the holoenzyme is formed, which can initiate transcription.

The protein localises to the plastid. The protein resides in the chloroplast. The enzyme catalyses RNA(n) + a ribonucleoside 5'-triphosphate = RNA(n+1) + diphosphate. Functionally, DNA-dependent RNA polymerase catalyzes the transcription of DNA into RNA using the four ribonucleoside triphosphates as substrates. This chain is DNA-directed RNA polymerase subunit beta, found in Jasminum nudiflorum (Winter jasmine).